We begin with the raw amino-acid sequence, 25 residues long: Small ribosomal subunit protein eS32 (25 aa).

Residues 1-25 (MRAKWRKKRMRRLKRKRRKMRARSK) form a disordered region.

Belongs to the eukaryotic ribosomal protein eS32 family. Component of the small ribosomal subunit.

The sequence is that of Small ribosomal subunit protein eS32 (RpL41) from Spodoptera frugiperda (Fall armyworm).